A 332-amino-acid polypeptide reads, in one-letter code: MHTLIRSFLGLWYVLGALAQTEIKLVADENVTLPCRHSLGHLGIQSLDIEWLSNISDHGKQVLLSYSGGQVYNAENHKGRYSFVSKYLEGDASLFIRSLQPSDAGQYICKVKNAGQYQWSFITVIVLVKPSELACSSEGAQLEGKNVTLNCKSTAGTKPLNYRWVRVNLKDNVERPVQSTARIGPENQLLLHNLSKTDNGSYRCEVSNEVGKRTCDVDVTVQSVSNTGILAGVACGVVVGVFLIFFTVWLLFHKKEFKKREEEEFFNEIREDAEAPKARLVKPGSSSSDSRSSQSGSSSTRSTTNSASRSQRTHSTQETPHGEQRHHCLEKI.

Residues 1–19 (MHTLIRSFLGLWYVLGALA) form the signal peptide. 2 consecutive Ig-like C2-type domains span residues 20–123 (QTEI…SFIT) and 130–220 (PSEL…VDVT). Residues 20-231 (QTEIKLVADE…QSVSNTGILA (212 aa)) are Extracellular-facing. 2 disulfides stabilise this stretch: cysteine 35–cysteine 109 and cysteine 151–cysteine 204. N-linked (GlcNAc...) asparagine glycosylation is present at asparagine 193. Residues 232 to 252 (GVACGVVVGVFLIFFTVWLLF) form a helical membrane-spanning segment. Over 253 to 332 (HKKEFKKREE…EQRHHCLEKI (80 aa)) the chain is Cytoplasmic. The disordered stretch occupies residues 276–332 (PKARLVKPGSSSSDSRSSQSGSSSTRSTTNSASRSQRTHSTQETPHGEQRHHCLEKI). Over residues 285–310 (SSSSDSRSSQSGSSSTRSTTNSASRS) the composition is skewed to low complexity. Residues 320–332 (PHGEQRHHCLEKI) show a composition bias toward basic and acidic residues.

It localises to the cell junction. It is found in the tight junction. Its subcellular location is the cell membrane. The protein is CXADR-like membrane protein (clmp) of Xenopus tropicalis (Western clawed frog).